The following is a 282-amino-acid chain: 3-methyl-2-oxobutanoate hydroxymethyltransferase (282 aa).

Mg(2+) contacts are provided by aspartate 45 and aspartate 84. Residues 45 to 46, aspartate 84, and lysine 114 each bind 3-methyl-2-oxobutanoate; that span reads DS. Residue glutamate 116 coordinates Mg(2+). Catalysis depends on glutamate 183, which acts as the Proton acceptor.

It belongs to the PanB family. In terms of assembly, homodecamer; pentamer of dimers. Mg(2+) is required as a cofactor.

It localises to the cytoplasm. The catalysed reaction is 3-methyl-2-oxobutanoate + (6R)-5,10-methylene-5,6,7,8-tetrahydrofolate + H2O = 2-dehydropantoate + (6S)-5,6,7,8-tetrahydrofolate. Its pathway is cofactor biosynthesis; (R)-pantothenate biosynthesis; (R)-pantoate from 3-methyl-2-oxobutanoate: step 1/2. In terms of biological role, catalyzes the reversible reaction in which hydroxymethyl group from 5,10-methylenetetrahydrofolate is transferred onto alpha-ketoisovalerate to form ketopantoate. In Syntrophobacter fumaroxidans (strain DSM 10017 / MPOB), this protein is 3-methyl-2-oxobutanoate hydroxymethyltransferase.